Reading from the N-terminus, the 827-residue chain is SH3-containing GRB2-like protein 3-interacting protein 1 (827 aa).

Disordered regions lie at residues 1-116 (MMEG…SHKK), 143-199 (IGNI…ALAP), and 223-278 (IWGS…QAAT). Basic and acidic residues-rich tracts occupy residues 16 to 32 (RKKE…DRDG) and 40 to 53 (LPYH…REGG). Residues S78, S104, S105, S107, S149, S151, S156, and S169 each carry the phosphoserine modification. Phosphothreonine occurs at positions 180 and 182. S236 is modified (phosphoserine). Over residues 245–260 (TGTPPPLPPKTVPATP) the composition is skewed to pro residues. T247 and T259 each carry phosphothreonine. Phosphoserine is present on residues S265, S287, S289, S300, S316, and S319. Residues 265-276 (SPLTVATGNDQA) show a composition bias toward polar residues. The segment at 315 to 505 (FSDASPEHVT…IAPLARAEST (191 aa)) is disordered. Residues 319–333 (SPEHVTPELTPREKV) are compositionally biased toward basic and acidic residues. A phosphothreonine mark is found at T324, T328, and T335. Over residues 335–345 (TPPAASDIPAD) the composition is skewed to low complexity. Over residues 346-369 (SPTPGPPGPPGSAGPPGPPGPRNV) the composition is skewed to pro residues. Phosphoserine is present on S371. Positions 377–392 (EVQKKVAEQTFIKDDY) are enriched in basic and acidic residues. A Phosphoserine modification is found at S398. T409 bears the Phosphothreonine mark. Residues 436–455 (ASGASSPARPATPLVPCSCS) show a composition bias toward low complexity. Residues 456–474 (TPPPPPPRPPSRPKLPPGK) show a composition bias toward pro residues. Positions 481–491 (SRPFSPPIHSS) are enriched in low complexity. S485 bears the Phosphoserine mark. The 269-residue stretch at 558–826 (TLPVAAAFTE…RFAAGKYLAD (269 aa)) folds into the MHD domain. Interaction with DPF motifs-containing proteins stretches follow at residues 560 to 566 (PVAAAFT), 592 to 594 (SFP), 666 to 669 (TYYN), and 812 to 817 (SLIKKR). Positions 648-827 (MPNLMTHLKK…FAAGKYLADN (180 aa)) are necessary and sufficient to mediate interaction with CANX.

In terms of assembly, interacts with proteins essential or regulating the formation of functional clathrin-coated pits. Interacts with CANX. Interacts with AP2A1. Interacts with EPS15. Interacts with SH3GL3. Interacts with AMPH. Interacts with ITSN1 (via SH3 domains). Interacts with and REPS1. Specifically expressed in brain. Also detected at lower levels in spleen and adipose tissue.

The protein localises to the membrane. It localises to the clathrin-coated pit. Functionally, may function in clathrin-mediated endocytosis. Has both a membrane binding/tubulating activity and the ability to recruit proteins essential to the formation of functional clathrin-coated pits. Has a preference for membranes enriched in phosphatidylserine and phosphoinositides and is required for the endocytosis of the transferrin receptor. May also bind tubulin. May play a role in the regulation of energy homeostasis. In Psammomys obesus (Fat sand rat), this protein is SH3-containing GRB2-like protein 3-interacting protein 1 (SGIP1).